The sequence spans 466 residues: ATP synthase subunit beta (466 aa).

Position 152-159 (152-159 (GGAGVGKT)) interacts with ATP.

Belongs to the ATPase alpha/beta chains family. As to quaternary structure, F-type ATPases have 2 components, CF(1) - the catalytic core - and CF(0) - the membrane proton channel. CF(1) has five subunits: alpha(3), beta(3), gamma(1), delta(1), epsilon(1). CF(0) has three main subunits: a(1), b(2) and c(9-12). The alpha and beta chains form an alternating ring which encloses part of the gamma chain. CF(1) is attached to CF(0) by a central stalk formed by the gamma and epsilon chains, while a peripheral stalk is formed by the delta and b chains.

Its subcellular location is the cell inner membrane. The catalysed reaction is ATP + H2O + 4 H(+)(in) = ADP + phosphate + 5 H(+)(out). Its function is as follows. Produces ATP from ADP in the presence of a proton gradient across the membrane. The catalytic sites are hosted primarily by the beta subunits. The protein is ATP synthase subunit beta of Sulfurovum sp. (strain NBC37-1).